We begin with the raw amino-acid sequence, 741 residues long: Phosphoribosylformylglycinamidine synthase subunit PurL (741 aa).

The active site involves H54. ATP contacts are provided by Y57 and K96. Position 98 (E98) interacts with Mg(2+). Substrate contacts are provided by residues S99–H102 and R121. Residue H100 is the Proton acceptor of the active site. D122 is a binding site for Mg(2+). Q245 is a substrate binding site. Position 273 (D273) interacts with Mg(2+). Residue E317–Q319 coordinates substrate. ATP-binding residues include D500 and G537. N538 contributes to the Mg(2+) binding site. S540 provides a ligand contact to substrate.

Belongs to the FGAMS family. In terms of assembly, monomer. Part of the FGAM synthase complex composed of 1 PurL, 1 PurQ and 2 PurS subunits.

The protein localises to the cytoplasm. The enzyme catalyses N(2)-formyl-N(1)-(5-phospho-beta-D-ribosyl)glycinamide + L-glutamine + ATP + H2O = 2-formamido-N(1)-(5-O-phospho-beta-D-ribosyl)acetamidine + L-glutamate + ADP + phosphate + H(+). Its pathway is purine metabolism; IMP biosynthesis via de novo pathway; 5-amino-1-(5-phospho-D-ribosyl)imidazole from N(2)-formyl-N(1)-(5-phospho-D-ribosyl)glycinamide: step 1/2. Functionally, part of the phosphoribosylformylglycinamidine synthase complex involved in the purines biosynthetic pathway. Catalyzes the ATP-dependent conversion of formylglycinamide ribonucleotide (FGAR) and glutamine to yield formylglycinamidine ribonucleotide (FGAM) and glutamate. The FGAM synthase complex is composed of three subunits. PurQ produces an ammonia molecule by converting glutamine to glutamate. PurL transfers the ammonia molecule to FGAR to form FGAM in an ATP-dependent manner. PurS interacts with PurQ and PurL and is thought to assist in the transfer of the ammonia molecule from PurQ to PurL. In Shouchella clausii (strain KSM-K16) (Alkalihalobacillus clausii), this protein is Phosphoribosylformylglycinamidine synthase subunit PurL.